The primary structure comprises 410 residues: Multidrug transporter MdfA (410 aa).

The Cytoplasmic portion of the chain corresponds to 1–15; that stretch reads MQNKLASGARLGRQA. Residues 16–36 form a helical membrane-spanning segment; the sequence is LLFPLCLVLYEFSTYIGNDMI. Residues 37–52 lie on the Periplasmic side of the membrane; sequence QPGMLAVVEQYQAGID. A helical membrane pass occupies residues 53-73; sequence WVPTSMTAYLAGGMFLQWLLG. Residues 74–82 lie on the Cytoplasmic side of the membrane; it reads PLSDRIGRR. A helical transmembrane segment spans residues 83 to 103; it reads PVMLAGVVWFIVTCLAILLAQ. At 104–109 the chain is on the periplasmic side; sequence NIEQFT. A helical membrane pass occupies residues 110 to 130; it reads LLRFLQGISLCFIGAVGYAAI. Residues 131-144 lie on the Cytoplasmic side of the membrane; it reads QESFEEAVCIKITA. A helical transmembrane segment spans residues 145–165; it reads LMANVALIAPLLGPLVGAAWI. Residue His166 is a topological domain, periplasmic. Residues 167–187 traverse the membrane as a helical segment; it reads VLPWEGMFVLFAALAAISFFG. Over 188–226 the chain is Cytoplasmic; that stretch reads LQRAMPETATRIGEKLSLKELGRDYKLVLKNGRFVAGAL. Residues 227 to 247 form a helical membrane-spanning segment; sequence ALGFVSLPLLAWIAQSPIIII. Residues 248–255 are Periplasmic-facing; the sequence is TGEQLSSY. A helical transmembrane segment spans residues 256–276; sequence EYGLLQVPIFGALIAGNLLLA. Over 277-287 the chain is Cytoplasmic; that stretch reads RLTSRRTVRSL. A helical membrane pass occupies residues 288–308; it reads IIMGGWPIMIGLLVAAAATVI. The Periplasmic segment spans residues 309 to 314; sequence SSHAYL. A helical transmembrane segment spans residues 315-335; sequence WMTAGLSIYAFGIGLANAGLV. Topologically, residues 336 to 346 are cytoplasmic; sequence RLTLFASDMSK. A helical transmembrane segment spans residues 347–367; it reads GTVSAAMGMLQMLIFTVGIEI. The Periplasmic portion of the chain corresponds to 368–378; that stretch reads SKHAWLNGGNG. Residues 379-399 traverse the membrane as a helical segment; it reads LFNLFNLVNGILWLSLMVIFL. Over 400–410 the chain is Cytoplasmic; that stretch reads KDKQMGNSHEG.

It belongs to the major facilitator superfamily. MdfA family. As to quaternary structure, monomer.

The protein resides in the cell inner membrane. Its function is as follows. Efflux pump driven by the proton motive force. Confers resistance to a broad spectrum of chemically unrelated drugs. This chain is Multidrug transporter MdfA (mdfA), found in Escherichia coli O6:H1 (strain CFT073 / ATCC 700928 / UPEC).